We begin with the raw amino-acid sequence, 268 residues long: ELL-associated factor 1 (268 aa).

Residues Ile-106 to Asp-268 are disordered. The segment covering Thr-128 to Gly-154 has biased composition (pro residues). Ser-165 bears the Phosphoserine mark. The segment covering Asp-171 to Val-181 has biased composition (basic and acidic residues). Residues Asp-182–Ser-262 are necessary for transactivation activity. The segment covering Ser-188–Gly-213 has biased composition (low complexity). The segment covering Asn-238 to Asp-268 has biased composition (polar residues).

This sequence belongs to the EAF family. In terms of assembly, component of the super elongation complex (SEC), at least composed of EAF1, EAF2, CDK9, MLLT3/AF9, AFF (AFF1 or AFF4), the P-TEFb complex and ELL (ELL, ELL2 or ELL3). Interacts with ELL and ELL2. As to expression, strongly expressed in heart, brain, placenta, lung, liver, skeletal muscle, kidney, pancreas, spleen, prostate, testis, small intestine and colon. Poorly expressed in thymus.

The protein resides in the nucleus speckle. Its subcellular location is the nucleus. It is found in the cajal body. Its function is as follows. Acts as a transcriptional transactivator of ELL and ELL2 elongation activities. The protein is ELL-associated factor 1 (EAF1) of Homo sapiens (Human).